A 480-amino-acid chain; its full sequence is tRNA (guanine(37)-N(1))-methyltransferase (480 aa).

A mitochondrion-targeting transit peptide spans 1-18 (MAAVWRRSARLFILLQRH). Residues histidine 273, 311-312 (DL), 339-340 (DG), and asparagine 367 each bind S-adenosyl-L-methionine. Positions 458–480 (HTQDRDTSEEPCPKKQKCEDSTN) are disordered.

Belongs to the class I-like SAM-binding methyltransferase superfamily. TRM5/TYW2 family. Monomer.

Its subcellular location is the mitochondrion matrix. The protein localises to the nucleus. It localises to the cytoplasm. The enzyme catalyses guanosine(37) in tRNA + S-adenosyl-L-methionine = N(1)-methylguanosine(37) in tRNA + S-adenosyl-L-homocysteine + H(+). In terms of biological role, involved in mitochondrial tRNA methylation. Specifically methylates the N1 position of guanosine-37 in various tRNAs. Methylation is not dependent on the nature of the nucleoside 5' of the target nucleoside. This is the first step in the biosynthesis of wybutosine (yW), a modified base adjacent to the anticodon of tRNAs and required for accurate decoding. The polypeptide is tRNA (guanine(37)-N(1))-methyltransferase (trmt5) (Danio rerio (Zebrafish)).